A 273-amino-acid polypeptide reads, in one-letter code: Exosome complex component MTR3 (273 aa).

The tract at residues 1-36 is disordered; it reads MPGDHRRIRGPEESQPPQLYAAEDDETPAARDPTRL.

This sequence belongs to the RNase PH family. In terms of assembly, component of the RNA exosome core complex (Exo-9), composed of EXOSC1, EXOSC2, EXOSC3, EXOSC4, EXOSC5, EXOSC6, EXOSC7, EXOSC8 and EXOSC9; within the complex interacts with EXOSC1, EXOSC7 and EXOSC8. The catalytically inactive RNA exosome core complex (Exo-9) associates with the catalytic subunit EXOSC10/RRP6. Exo-9 may associate with DIS3 to form the nucleolar exosome complex, or DIS3L to form the cytoplasmic exosome complex. Exo-9 is formed by a hexameric base ring consisting of the heterodimers EXOSC4-EXOSC9, EXOSC5-EXOSC8 and EXOSC6-EXOSC7, and a cap ring consisting of EXOSC1, EXOSC2 and EXOSC3. The RNA exosome complex associates with cofactors EXOSC10/RRP6, C1D/RRP47, MPHOSPH6/MPP6 and MTREX/MTR4.

It localises to the cytoplasm. The protein resides in the nucleus. Its subcellular location is the nucleolus. Its function is as follows. Non-catalytic component of the RNA exosome complex which has 3'-&gt;5' exoribonuclease activity and participates in a multitude of cellular RNA processing and degradation events. In the nucleus, the RNA exosome complex is involved in proper maturation of stable RNA species such as rRNA, snRNA and snoRNA, in the elimination of RNA processing by-products and non-coding 'pervasive' transcripts, such as antisense RNA species and promoter-upstream transcripts (PROMPTs), and of mRNAs with processing defects, thereby limiting or excluding their export to the cytoplasm. The RNA exosome may be involved in Ig class switch recombination (CSR) and/or Ig variable region somatic hypermutation (SHM) by targeting AICDA deamination activity to transcribed dsDNA substrates. In the cytoplasm, the RNA exosome complex is involved in general mRNA turnover and specifically degrades inherently unstable mRNAs containing AU-rich elements (AREs) within their 3' untranslated regions, and in RNA surveillance pathways, preventing translation of aberrant mRNAs. It seems to be involved in degradation of histone mRNA. The catalytic inactive RNA exosome core complex of 9 subunits (Exo-9) is proposed to play a pivotal role in the binding and presentation of RNA for ribonucleolysis, and to serve as a scaffold for the association with catalytic subunits and accessory proteins or complexes. This is Exosome complex component MTR3 (Exosc6) from Mus musculus (Mouse).